A 234-amino-acid polypeptide reads, in one-letter code: Glutathione S-transferase U16 (234 aa).

One can recognise a GST N-terminal domain in the interval Glu-5–Ala-85. Glutathione-binding positions include Ser-15 to Pro-16, Ser-42 to Lys-43, Lys-56 to Val-57, and Glu-69 to Ser-70. In terms of domain architecture, GST C-terminal spans His-92–Phe-219.

This sequence belongs to the GST superfamily. Tau family.

The protein resides in the cytoplasm. It is found in the cytosol. It carries out the reaction RX + glutathione = an S-substituted glutathione + a halide anion + H(+). Its function is as follows. May be involved in the conjugation of reduced glutathione to a wide number of exogenous and endogenous hydrophobic electrophiles and have a detoxification role against certain herbicides. In Arabidopsis thaliana (Mouse-ear cress), this protein is Glutathione S-transferase U16 (GSTU16).